A 451-amino-acid polypeptide reads, in one-letter code: UDP-N-acetylmuramoylalanine--D-glutamate ligase (451 aa).

119 to 125 (GSNGKTT) is an ATP binding site.

It belongs to the MurCDEF family.

The protein resides in the cytoplasm. It catalyses the reaction UDP-N-acetyl-alpha-D-muramoyl-L-alanine + D-glutamate + ATP = UDP-N-acetyl-alpha-D-muramoyl-L-alanyl-D-glutamate + ADP + phosphate + H(+). Its pathway is cell wall biogenesis; peptidoglycan biosynthesis. Its function is as follows. Cell wall formation. Catalyzes the addition of glutamate to the nucleotide precursor UDP-N-acetylmuramoyl-L-alanine (UMA). In Streptococcus agalactiae serotype Ia (strain ATCC 27591 / A909 / CDC SS700), this protein is UDP-N-acetylmuramoylalanine--D-glutamate ligase.